Reading from the N-terminus, the 337-residue chain is Vegetative-specific protein H5 (337 aa).

The Involved in the stabilization of the negatively charged intermediate by the formation of the oxyanion hole motif lies at 88-90 (HGG). Catalysis depends on residues serine 161, aspartate 261, and histidine 291.

The protein belongs to the 'GDXG' lipolytic enzyme family.

The chain is Vegetative-specific protein H5 (cinB) from Dictyostelium discoideum (Social amoeba).